The sequence spans 267 residues: Eukaryotic translation initiation factor 3 subunit J (267 aa).

2 disordered regions span residues 1-118 (MAPS…DLKH) and 221-241 (MREE…KTKV). Over residues 28-46 (DEEEEDVLDSWDAAEDSEV) the composition is skewed to acidic residues. A coiled-coil region spans residues 44–99 (SEVEREKAAKAAAAAAKAEAEAAAKKKSKAQRIEERKQERKKLAEANESDEDSEED). Over residues 74-88 (QRIEERKQERKKLAE) the composition is skewed to basic and acidic residues. Positions 90–100 (NESDEDSEEDE) are enriched in acidic residues. Composition is skewed to basic and acidic residues over residues 108–118 (RRTEKEGDLKH) and 221–231 (MREERAADKGN).

Belongs to the eIF-3 subunit J family. In terms of assembly, component of the eukaryotic translation initiation factor 3 (eIF-3) complex.

It localises to the cytoplasm. Its function is as follows. Component of the eukaryotic translation initiation factor 3 (eIF-3) complex, which is involved in protein synthesis of a specialized repertoire of mRNAs and, together with other initiation factors, stimulates binding of mRNA and methionyl-tRNAi to the 40S ribosome. The eIF-3 complex specifically targets and initiates translation of a subset of mRNAs involved in cell proliferation. The chain is Eukaryotic translation initiation factor 3 subunit J (hcr1) from Aspergillus fumigatus (strain CBS 144.89 / FGSC A1163 / CEA10) (Neosartorya fumigata).